The sequence spans 2342 residues: Outer kinetochore KNL1 complex subunit KNL1 (2342 aa).

The tract at residues M1–S56 is disordered. The interval M1–T250 is may mediate oligomerization. The segment at M1 to L728 is interaction with BUB1 and BUB1B. Interaction with microtubules regions lie at residues R17–L34 and K53–S80. The segment at H23–S80 is interaction with PP1CA; contains the protein phosphatase 1 (PP1) interaction motifs SILK, RVXF and phi-phi. S24 is modified (phosphoserine; by AURKB). Phosphoserine is present on S32. At S60 the chain carries Phosphoserine; by AURKB. The interval E174–G190 is interaction with BUB1. Positions A210–N226 are interaction with BUB1B. Residue T539 is modified to Phosphothreonine. S578 and S584 each carry phosphoserine. T586 is modified (phosphothreonine). The disordered stretch occupies residues A620–N646. Over residues E622–S633 the composition is skewed to low complexity. At S767 the chain carries Phosphoserine. Residues E855 to D1201 form a 2 X 104 AA approximate repeats region. Residues D885–D989 form repeat 1. T901 is subject to Phosphothreonine. Phosphoserine occurs at positions 956, 1039, 1076, and 1088. Copy 2 of the repeat occupies D1099–D1201. The residue at position 1448 (S1448) is a Phosphoserine. A disordered region spans residues S1639–P1662. Over residues K1642–K1651 the composition is skewed to basic and acidic residues. A phosphoserine mark is found at S1675 and S1773. Residues T1789–I1803 carry the Nuclear localization signal motif. Position 1831 is a phosphoserine (S1831). Phosphoserine; by TTK occurs at positions 1831 and 1834. A phosphoserine mark is found at S1845 and S1860. The interval K1981–Q2108 is required for interaction with ZWINT. A coiled-coil region spans residues V2024–S2133. The interaction with NSL1, DSN1 and required for assembly into the outer kinetochore stretch occupies residues E2091–T2311.

In terms of assembly, component of the KNL1 complex composed of KNL1 and ZWINT. Part of the ten-subunit outer kinetochore KMN network that includes the KNL1, MIS12 and NDC80 complexes; a bioriented kinetochore contains approximately 150 copies of the network. Interacts (via C-terminus) with the MIS12 complex subunits NSL1 (via C-terminus), PMF1 and DSN1; the interaction is direct. Interacts (via N-terminal region) with BUB1B (via BUB1 N-terminal domain); the interaction is direct and is required for cell cycle arrest upon activation of the mitotic spindle assembly checkpoint. Interacts (via N-terminal region) with BUB1 (via BUB1 N-terminal domain); the interaction is direct. Interacts with the protein phosphatase PP1 subunit PPP1CA; the interaction is direct and mutually exclusive with binding to microtubules. Interacts with the protein phosphatase PP1 subunit PPP1CC; the interaction is direct and mutually exclusive with binding to microtubules. Phosphorylation by AURKB negatively regulates its interaction with protein phosphatase 1 (PP1) subunit PPP1CA and with microtubules. Highly expressed in testis, where it is localized in germ cells, in particular in spermatocytes and in the pre-acrosome of round spermatids. Detected in the acrosome of ejaculated spermatozoa. Detected in adult thymus, bone marrow, colon, small intestine, appendix and placenta, and in fetal liver and thymus.

It is found in the nucleus. Its subcellular location is the chromosome. The protein localises to the centromere. It localises to the kinetochore. The protein resides in the cytoplasm. Its function is as follows. Acts as a component of the outer kinetochore KNL1 complex that serves as a docking point for spindle assembly checkpoint components and mediates microtubule-kinetochore interactions. Kinetochores, consisting of a centromere-associated inner segment and a microtubule-contacting outer segment, play a crucial role in chromosome segregation by mediating the physical connection between centromeric DNA and spindle microtubules. The outer kinetochore is made up of the ten-subunit KMN network, comprising the MIS12, NDC80 and KNL1 complexes, and auxiliary microtubule-associated components; together they connect the outer kinetochore with the inner kinetochore, bind microtubules, and mediate interactions with mitotic checkpoint proteins that delay anaphase until chromosomes are bioriented on the spindle. Required for kinetochore binding by a distinct subset of kMAPs (kinetochore-bound microtubule-associated proteins) and motors. Acts in coordination with CENPK to recruit the NDC80 complex to the outer kinetochore. Can bind either to microtubules or to the protein phosphatase 1 (PP1) catalytic subunits PPP1CA and PPP1CC (via overlapping binding sites), it has higher affinity for PP1. Recruits MAD2L1 to the kinetochore and also directly links BUB1 and BUB1B to the kinetochore. In addition to orienting mitotic chromosomes, it is also essential for alignment of homologous chromosomes during meiotic metaphase I. In meiosis I, required to activate the spindle assembly checkpoint at unattached kinetochores to correct erroneous kinetochore-microtubule attachments. The protein is Outer kinetochore KNL1 complex subunit KNL1 of Homo sapiens (Human).